A 79-amino-acid polypeptide reads, in one-letter code: Large ribosomal subunit protein uL24 (79 aa).

This sequence belongs to the universal ribosomal protein uL24 family. As to quaternary structure, part of the 50S ribosomal subunit.

In terms of biological role, one of two assembly initiator proteins, it binds directly to the 5'-end of the 23S rRNA, where it nucleates assembly of the 50S subunit. Functionally, one of the proteins that surrounds the polypeptide exit tunnel on the outside of the subunit. The protein is Large ribosomal subunit protein uL24 of Lactobacillus johnsonii (strain CNCM I-12250 / La1 / NCC 533).